The sequence spans 269 residues: Tungstate-binding protein TupA (269 aa).

The signal sequence occupies residues Met-1–Ala-17.

The complex is composed of two ATP-binding proteins (TupC), two transmembrane proteins (TupB) and a solute-binding protein (TupA).

It is found in the periplasm. Functionally, part of an ABC transporter complex involved in ultra-high affinity tungstate uptake. Specifically binds tungstate. The polypeptide is Tungstate-binding protein TupA (Campylobacter jejuni subsp. jejuni serotype O:2 (strain ATCC 700819 / NCTC 11168)).